Consider the following 432-residue polypeptide: MHISVVGLSHRTAPVEIRERLSIPEQTMETSLQSLRGNEQVLEASILSTCNRLEIYTLVRNPDLGVSAVSDFLSSHSGLETGELTPHLFSYHHEDAVDHLMRVAAGLDSLVLGEGQILSQVKKMMRLGQEHKSLGPILNRLLTQAVTTGKRVRSETNLGTGAVSISSAAVELAQLKLGQSRGLDHLVTLESEQIAVVGAGRMSRLLLQHLQAKGASGVVLLNRTVERAEQLSADFPDLPVQCRPLTDLDQYLSTCSLMFTSTAADDPIIDAARLAPLNRRSKLRLIDIGVPRNIAADAADVNGVESHDVDDLQEVVARNQEARQAMAREAEQLLQQEAQQFLEWWDSLEAVPTINQLRSSMESIRTEELQKALSRMGPDFSARERKVVEALSKGIINKILHTPVTQLRAPQTRQDRQQALRIVERLFDLEAS.

Substrate is bound by residues Thr49 to Arg52, Ser109, Glu114 to Gln116, and Gln120. The Nucleophile role is filled by Cys50. Residue Gly198–Ser203 participates in NADP(+) binding.

It belongs to the glutamyl-tRNA reductase family. In terms of assembly, homodimer.

The catalysed reaction is (S)-4-amino-5-oxopentanoate + tRNA(Glu) + NADP(+) = L-glutamyl-tRNA(Glu) + NADPH + H(+). Its pathway is porphyrin-containing compound metabolism; protoporphyrin-IX biosynthesis; 5-aminolevulinate from L-glutamyl-tRNA(Glu): step 1/2. It participates in porphyrin-containing compound metabolism; chlorophyll biosynthesis. Functionally, catalyzes the NADPH-dependent reduction of glutamyl-tRNA(Glu) to glutamate 1-semialdehyde (GSA). This chain is Glutamyl-tRNA reductase, found in Synechococcus sp. (strain CC9605).